The sequence spans 606 residues: Serine/threonine-protein kinase A-Raf (606 aa).

Positions 19–91 (GTVKVYLPNK…DGEELIVEVL (73 aa)) constitute an RBD domain. A Phorbol-ester/DAG-type zinc finger spans residues 98 to 144 (MHNFVRKTFFSLAFCDFCLKFLFHGFRCQTCGYKFHQHCSSKVPTVC). Zn(2+)-binding residues include His99, Cys112, Cys115, Cys125, Cys128, His133, Cys136, and Cys144. Phosphoserine occurs at positions 157 and 162. The segment at 160–207 (DLSGGSRQHEAPSNRPLNELLTPQGPSPRTQHCDPEHFPFPAPANAPL) is disordered. The residue at position 181 (Thr181) is a Phosphothreonine. 2 positions are modified to phosphoserine: Ser186 and Ser214. The disordered stretch occupies residues 240 to 290 (STDAAGSRGGSDGTPRGSPSPASVSSGRKSPHSKSPAEQRERKSLADDKKK). Thr253 carries the post-translational modification Phosphothreonine. A phosphoserine mark is found at Ser257 and Ser269. Basic and acidic residues predominate over residues 274–289 (SPAEQRERKSLADDKK). One can recognise a Protein kinase domain in the interval 310–570 (VQLLKRIGTG…PQILATIELL (261 aa)). ATP contacts are provided by residues 316-324 (IGTGSFGTV) and Lys336. Phosphothreonine is present on Thr318. The active-site Proton acceptor is the Asp429.

The protein belongs to the protein kinase superfamily. TKL Ser/Thr protein kinase family. RAF subfamily. As to quaternary structure, interacts with TH1L/NELFD. The cofactor is Zn(2+). Dephosphorylation of Ser-214 by the SHOC2-MRAS-PP1c (SMP) complex consisting of SHOC2, GTP-bound M-Ras/MRAS and the catalytic subunit of protein phosphatase 1 (PPP1CA, PPP1CB or PPP1CC); this relieves inactivation and stimulates kinase activity. Predominantly in urogenital tissues.

It catalyses the reaction L-seryl-[protein] + ATP = O-phospho-L-seryl-[protein] + ADP + H(+). It carries out the reaction L-threonyl-[protein] + ATP = O-phospho-L-threonyl-[protein] + ADP + H(+). Functionally, involved in the transduction of mitogenic signals from the cell membrane to the nucleus. May also regulate the TOR signaling cascade. Phosphorylates PFKFB2. In terms of biological role, serves as a positive regulator of myogenic differentiation by inducing cell cycle arrest, the expression of myogenin and other muscle-specific proteins, and myotube formation. The protein is Serine/threonine-protein kinase A-Raf (ARAF) of Homo sapiens (Human).